A 715-amino-acid chain; its full sequence is Glycine--tRNA ligase beta subunit (715 aa).

It belongs to the class-II aminoacyl-tRNA synthetase family. In terms of assembly, tetramer of two alpha and two beta subunits.

It is found in the cytoplasm. It carries out the reaction tRNA(Gly) + glycine + ATP = glycyl-tRNA(Gly) + AMP + diphosphate. The protein is Glycine--tRNA ligase beta subunit of Nitrosomonas europaea (strain ATCC 19718 / CIP 103999 / KCTC 2705 / NBRC 14298).